The primary structure comprises 360 residues: Ankyrin repeat domain-containing protein 2 (360 aa).

Residues 5–120 (PSWAGVGALA…GIQNLIELRK (116 aa)) form a may mediate interaction with PML, p53/TP53 and YBX1 region. Ser99 is subject to Phosphoserine; by PKB/AKT2. Residues 126 to 147 (KRDALAASHEPPPEPEEITGPV) are disordered. Acidic residues predominate over residues 138 to 147 (PEPEEITGPV). ANK repeat units lie at residues 147-176 (VDEE…SADT), 180-209 (FRRT…TVDF), 213-242 (LDCT…DTNV), 246-275 (LLST…EINA), and 279-308 (EGDT…DMMT). The span at 330 to 342 (ALEHPEPGAEHNG) shows a compositional bias: basic and acidic residues. The disordered stretch occupies residues 330 to 360 (ALEHPEPGAEHNGLEGPNDSGRETPQPVPAQ).

In terms of assembly, interacts with ID3; both proteins cooperate in myoblast differentiation. Interacts with TTN/titin. Interacts (via ANK repeats) with TCAP; the interaction is direct. Interacts with TJP1 (via PDZ domains). Interacts with PML; the interaction is direct. Interacts with p53/TP53. Interacts with YBX1. Interacts with AKT2. Phosphorylation at Ser-99 by PKB/AKT2 in response to oxidative stress induces translocation to the nucleus and negatively regulates myoblast differentiation. As to expression, mostly expressed in skeletal and cardiac muscles. Found in slow fibers. Also expressed in kidney, but to a lower extent (at protein level).

The protein localises to the cytoplasm. It localises to the myofibril. Its subcellular location is the sarcomere. It is found in the i band. The protein resides in the cytosol. The protein localises to the nucleus. It localises to the PML body. In terms of biological role, functions as a negative regulator of myocyte differentiation. May interact with both sarcoplasmic structural proteins and nuclear proteins to regulate gene expression during muscle development and in response to muscle stress. The chain is Ankyrin repeat domain-containing protein 2 (ANKRD2) from Homo sapiens (Human).